Consider the following 342-residue polypeptide: Holliday junction branch migration complex subunit RuvB (342 aa).

The tract at residues 1–179 (MTNILSPEKS…FGIPMRLNFY (179 aa)) is large ATPase domain (RuvB-L). Residues Ile-18, Arg-19, Gly-60, Lys-63, Thr-64, Thr-65, 126-128 (EDF), Arg-169, Tyr-179, and Arg-216 each bind ATP. Thr-64 contributes to the Mg(2+) binding site. The tract at residues 180–250 (NTEELKKVLN…VSDFGLNRLE (71 aa)) is small ATPAse domain (RuvB-S). The interval 253–342 (RIGLDSNDYR…HQFNIFNENE (90 aa)) is head domain (RuvB-H). Positions 289, 308, and 313 each coordinate DNA.

It belongs to the RuvB family. In terms of assembly, homohexamer. Forms an RuvA(8)-RuvB(12)-Holliday junction (HJ) complex. HJ DNA is sandwiched between 2 RuvA tetramers; dsDNA enters through RuvA and exits via RuvB. An RuvB hexamer assembles on each DNA strand where it exits the tetramer. Each RuvB hexamer is contacted by two RuvA subunits (via domain III) on 2 adjacent RuvB subunits; this complex drives branch migration. In the full resolvosome a probable DNA-RuvA(4)-RuvB(12)-RuvC(2) complex forms which resolves the HJ.

Its subcellular location is the cytoplasm. The catalysed reaction is ATP + H2O = ADP + phosphate + H(+). The RuvA-RuvB-RuvC complex processes Holliday junction (HJ) DNA during genetic recombination and DNA repair, while the RuvA-RuvB complex plays an important role in the rescue of blocked DNA replication forks via replication fork reversal (RFR). RuvA specifically binds to HJ cruciform DNA, conferring on it an open structure. The RuvB hexamer acts as an ATP-dependent pump, pulling dsDNA into and through the RuvAB complex. RuvB forms 2 homohexamers on either side of HJ DNA bound by 1 or 2 RuvA tetramers; 4 subunits per hexamer contact DNA at a time. Coordinated motions by a converter formed by DNA-disengaged RuvB subunits stimulates ATP hydrolysis and nucleotide exchange. Immobilization of the converter enables RuvB to convert the ATP-contained energy into a lever motion, pulling 2 nucleotides of DNA out of the RuvA tetramer per ATP hydrolyzed, thus driving DNA branch migration. The RuvB motors rotate together with the DNA substrate, which together with the progressing nucleotide cycle form the mechanistic basis for DNA recombination by continuous HJ branch migration. Branch migration allows RuvC to scan DNA until it finds its consensus sequence, where it cleaves and resolves cruciform DNA. This is Holliday junction branch migration complex subunit RuvB from Rickettsia rickettsii (strain Sheila Smith).